The primary structure comprises 963 residues: Collagen alpha-1(I) chain (963 aa).

The interval 1–963 is disordered; the sequence is GPMGPSGPRG…PGPPGPPGPP (963 aa). Over residues 40–54 the composition is skewed to basic and acidic residues; sequence NGDDGEAGKPGRPGE. A Phosphoserine modification is found at Ser82. Composition is skewed to low complexity over residues 90-106 and 129-142; these read DAGP…PGEN and PAGA…TGAA. Pro residues predominate over residues 144–156; that stretch reads PPGPTGPAGPPGF. Residues 190 to 229 are compositionally biased toward low complexity; that stretch reads AGAAGPAGNPGADGQPGAKGANGAPGIAGAPGFPGARGPS. A compositionally biased stretch (gly residues) spans 296 to 305; it reads GERGGPGARG. Low complexity-rich tracts occupy residues 313–337, 349–375, 384–403, 482–495, 555–569, and 582–609; these read AGPK…PGEA, KGIT…QDGR, ARGQ…AGEP, PRGA…DGAK, SGPS…ARGA, and AGFA…KGDA. A Phosphoserine modification is found at Ser558. The span at 611–623 shows a compositional bias: pro residues; the sequence is PPGPAGPTGPPGP. Composition is skewed to low complexity over residues 638-654, 683-692, and 702-726; these read SAGP…AGRV, ETGPAGRPGE, and AGEK…QGIA. 2 stretches are compositionally biased toward pro residues: residues 767-777 and 813-828; these read PPGPVGPPGIA and AGPP…PGPV. Over residues 849 to 863 the composition is skewed to low complexity; that stretch reads IGPVGARGPAGPQGP. Residues 864–878 are compositionally biased toward basic and acidic residues; that stretch reads RGDKGETGEQGDRGI. Low complexity predominate over residues 897-930; the sequence is PGEQGPSGASGPAGPRGPPGSAGAPGKDGINGIP. Positions 948-963 are enriched in pro residues; sequence VGPPGPPGPPGPPGPP.

It belongs to the fibrillar collagen family. In terms of assembly, trimers of one alpha 2(I) and two alpha 1(I) chains. Post-translationally, prolines at the third position of the tripeptide repeating unit (G-X-Y) are hydroxylated in some or all of the chains. As to expression, forms the fibrils of tendon, ligaments and bones. In bones, the fibrils are mineralized with calcium hydroxyapatite.

The protein resides in the secreted. It is found in the extracellular space. Its subcellular location is the extracellular matrix. In terms of biological role, type I collagen is a member of group I collagen (fibrillar forming collagen). This is Collagen alpha-1(I) chain from Tapirus terrestris (Lowland tapir).